The following is a 66-amino-acid chain: DNA gyrase inhibitor YacG (66 aa).

Zn(2+) contacts are provided by cysteine 9, cysteine 12, cysteine 28, and cysteine 32. The segment at 45 to 66 (HKIAGSEESEDELYSGDLEPRH) is disordered.

It belongs to the DNA gyrase inhibitor YacG family. Interacts with GyrB. Zn(2+) serves as cofactor.

Inhibits all the catalytic activities of DNA gyrase by preventing its interaction with DNA. Acts by binding directly to the C-terminal domain of GyrB, which probably disrupts DNA binding by the gyrase. The sequence is that of DNA gyrase inhibitor YacG from Pseudomonas putida (strain ATCC 47054 / DSM 6125 / CFBP 8728 / NCIMB 11950 / KT2440).